The following is a 490-amino-acid chain: GTPase Der (490 aa).

EngA-type G domains are found at residues 1-165 (MRIA…QIPV) and 227-400 (LKVA…TIAT). GTP-binding positions include 7-14 (GRPNVGKS), 54-58 (DTGGV), 117-120 (NKAD), 233-240 (GHPNVGKS), 280-284 (DTAGL), and 345-348 (NKWD). The KH-like domain occupies 401–485 (TKLSTSLVNK…PFDLEYKAKP (85 aa)).

Belongs to the TRAFAC class TrmE-Era-EngA-EngB-Septin-like GTPase superfamily. EngA (Der) GTPase family. In terms of assembly, associates with the 50S ribosomal subunit.

In terms of biological role, GTPase that plays an essential role in the late steps of ribosome biogenesis. This Chlamydia trachomatis serovar A (strain ATCC VR-571B / DSM 19440 / HAR-13) protein is GTPase Der.